We begin with the raw amino-acid sequence, 901 residues long: MSILTRIFGSRNERVLRKLKKQVVKINKMEPAFEALSDDELKAKTQEFRDRLSGGETLQQILPEAFATVREASKRVLGMRHFDVQLIGGMVLTNRCIAEMRTGEGKTLTATLPCYLIALEGKGVHVVTVNDYLARRDAETNRPLFEFLGMSVGVNIPGLSPEEKREAYAADITYATNSELGFDYLRDNLAHSKEERFQRTLGYALVDEVDSILIDEARTPLIISGQAEKSSELYIAVNKLIPSLIKQEKEDTEEYQGEGDFTLDLKSKQAHLTERGQEKVEDWLIAQGLMPEGDSLYSPSRIVLLHHVMAALRAHTLFEKDVDYIVKDGEIVIVDEHTGRTMAGRRWSDGLHQAIEAKEGVDIKSENQTVASISYQNYFRLYERLAGMTGTADTEAFEFQQIYGLETVVIPTNRPMIRDDRTDVMFENEQYKFNAIIEDIKDCVERQQPVLVGTISVEKSEELSKALDKAGIKHNVLNAKFHQQEAEIVAEAGFPSAVTIATNMAGRGTDIILGGNWKAQAAKLENPTQEQIEALKAEWEKNHEIVMKAGGLHIIGTERHESRRIDNQLRGRSGRQGDPGSSRFYLSLEDGLMRIYLNEGKRNLMRKAFTVAGEAMESKMLAKVIASAQAKVEAFHFDGRKNLLEYDDVANDQRHAIYEQRNYLLDNDDISETINAIRHDVFNGVIDQYIPPQSLEEQWDIKGLEERLSQEFGMELPISNWLEEDNNLHEESLRERIVEIAEKEYKEKEALVGEDAMHHFEKGVMLQTLDELWKEHLASMDYLRQGIHLRGYAQKDPKQEYKKESFRMFTEMLDSLKHHVIMTLTRVRVRTQEEMEEAELARQEMATRINQNNLPVDENSQTTQNSETEDYSDRRIGRNEPCPCGSGKKYKHCHGSRVARQ.

Residues glutamine 85, 103–107, and aspartate 510 contribute to the ATP site; that span reads GEGKT. The disordered stretch occupies residues 847-901; it reads TRINQNNLPVDENSQTTQNSETEDYSDRRIGRNEPCPCGSGKKYKHCHGSRVARQ. Residues 848–866 show a composition bias toward polar residues; it reads RINQNNLPVDENSQTTQNS. Zn(2+) contacts are provided by cysteine 882, cysteine 884, cysteine 893, and histidine 894. Over residues 888–901 the composition is skewed to basic residues; the sequence is KKYKHCHGSRVARQ.

Belongs to the SecA family. As to quaternary structure, monomer and homodimer. Part of the essential Sec protein translocation apparatus which comprises SecA, SecYEG and auxiliary proteins SecDF-YajC and YidC. It depends on Zn(2+) as a cofactor.

The protein localises to the cell inner membrane. Its subcellular location is the cytoplasm. It catalyses the reaction ATP + H2O + cellular proteinSide 1 = ADP + phosphate + cellular proteinSide 2.. Part of the Sec protein translocase complex. Interacts with the SecYEG preprotein conducting channel. Has a central role in coupling the hydrolysis of ATP to the transfer of proteins into and across the cell membrane, serving both as a receptor for the preprotein-SecB complex and as an ATP-driven molecular motor driving the stepwise translocation of polypeptide chains across the membrane. This chain is Protein translocase subunit SecA, found in Haemophilus influenzae (strain PittGG).